A 460-amino-acid chain; its full sequence is Glucan endo-1,3-beta-D-glucosidase (460 aa).

The signal sequence occupies residues 1-26; the sequence is MAANVQTSSLLFLVFLLLQNFYSANS. E123 (proton donor) is an active-site residue. Catalysis depends on E268, which acts as the Nucleophile. Positions 352-371 are disordered; it reads NTQNPTTPATPTPTPKAAGS. N355 carries N-linked (GlcNAc...) asparagine glycosylation. C373 and C435 are joined by a disulfide. N-linked (GlcNAc...) asparagine glycosylation occurs at N447.

Belongs to the glycosyl hydrolase 17 family. Homodimer. Post-translationally, glycosylated. Contains two additional disulfide bonds, but it is unclear if they are between the pairs Cys-392-Cys-398 and Cys-407-Cys-453 (PudMed:18096638) or between the pairs Cys-392-Cys-453 and Cys-398-Cys-407 (PudMed:12392450). Expressed only in pollen.

It is found in the secreted. It carries out the reaction Hydrolysis of (1-&gt;3)-beta-D-glucosidic linkages in (1-&gt;3)-beta-D-glucans.. This chain is Glucan endo-1,3-beta-D-glucosidase (OLE9), found in Olea europaea (Common olive).